A 515-amino-acid chain; its full sequence is Galactose-1-phosphate uridylyltransferase (515 aa).

The protein belongs to the galactose-1-phosphate uridylyltransferase type 2 family.

It localises to the cytoplasm. It carries out the reaction alpha-D-galactose 1-phosphate + UDP-alpha-D-glucose = alpha-D-glucose 1-phosphate + UDP-alpha-D-galactose. It functions in the pathway carbohydrate metabolism; galactose metabolism. Functionally, transfers the UMP unit from UDP-glucose (UDP-Glc) to Gal1P. Can also transfer the UMP unit to GlcNAc1P and GalNAc1P. Involved in the general galactose metabolism, and also involved in the lacto-N-biose I/galacto-N-biose (LNB/GNB) degradation pathway, which is important for host intestinal colonization by bifidobacteria. The protein is Galactose-1-phosphate uridylyltransferase of Bifidobacterium longum subsp. longum (strain ATCC 15707 / DSM 20219 / JCM 1217 / NCTC 11818 / E194b).